A 467-amino-acid polypeptide reads, in one-letter code: Glutamate--tRNA ligase 1 (467 aa).

A 'HIGH' region motif is present at residues 8–18 (PSPTGHLHVGG). Residues 230-234 (PLSKR) carry the 'KMSKS' region motif. Position 233 (K233) interacts with ATP.

Belongs to the class-I aminoacyl-tRNA synthetase family. Glutamate--tRNA ligase type 1 subfamily. Monomer.

The protein localises to the cytoplasm. The catalysed reaction is tRNA(Glu) + L-glutamate + ATP = L-glutamyl-tRNA(Glu) + AMP + diphosphate. In terms of biological role, catalyzes the attachment of glutamate to tRNA(Glu) in a two-step reaction: glutamate is first activated by ATP to form Glu-AMP and then transferred to the acceptor end of tRNA(Glu). This chain is Glutamate--tRNA ligase 1, found in Petrotoga mobilis (strain DSM 10674 / SJ95).